An 88-amino-acid polypeptide reads, in one-letter code: Small ribosomal subunit protein bS20 (88 aa).

Belongs to the bacterial ribosomal protein bS20 family.

Its function is as follows. Binds directly to 16S ribosomal RNA. This Brucella abortus (strain S19) protein is Small ribosomal subunit protein bS20.